We begin with the raw amino-acid sequence, 181 residues long: Cyclic phosphodiesterase (181 aa).

Residue H42 is the Proton donor/acceptor of the active site. T44 serves as a coordination point for substrate. Intrachain disulfides connect C64–C177 and C104–C110. The Proton donor/acceptor role is filled by H119. Substrate-binding residues include S121 and Y124.

The protein belongs to the 2H phosphoesterase superfamily. CPD1 family. Expressed in leaves, stems, roots, floral buds and germinating seeds.

It localises to the cytoplasm. It carries out the reaction ADP-alpha-D-ribose 1'',2''-cyclic phosphate + H2O = ADP-alpha-D-ribose 1''-phosphate + H(+). The catalysed reaction is 2',3'-cyclophospho-AMP + H2O = adenosine 2'-phosphate + H(+). The enzyme catalyses 2',3'-cyclophospho-GMP + H2O = guanosine 2'-phosphate + H(+). It catalyses the reaction 2',3'-cyclophospho-UMP + H2O = uridine 2'-phosphate + H(+). It carries out the reaction 2',3'-cyclophospho-CMP + H2O = cytidine 2'-phosphate + H(+). Inhibited by Cu(2+) and Zn(2+) at 0.5 mM by 93 and 87% respectively. Not inhibited by Ca(2+), Mg(2+), Co(2+), Ni(2+), and EDTA at 0.5 mM. In terms of biological role, hydrolyzes ADP-ribose 1'',2''-cyclic phosphate (Appr&gt;1) that is produced during tRNA splicing into ADP-ribose 1''-phosphate (Appr-1''p). Also acts on nucleoside 2',3'-cyclic phosphates. This Arabidopsis thaliana (Mouse-ear cress) protein is Cyclic phosphodiesterase.